Here is a 399-residue protein sequence, read N- to C-terminus: Argininosuccinate synthase (399 aa).

Position 9-17 (9-17) interacts with ATP; it reads AYSGGLDTS. Tyrosine 85 serves as a coordination point for L-citrulline. Position 115 (glycine 115) interacts with ATP. L-aspartate is bound by residues threonine 117, asparagine 121, and aspartate 122. An L-citrulline-binding site is contributed by asparagine 121. Residues arginine 125, serine 173, glutamate 258, and tyrosine 270 each coordinate L-citrulline.

The protein belongs to the argininosuccinate synthase family. Type 1 subfamily. As to quaternary structure, homotetramer.

It localises to the cytoplasm. The enzyme catalyses L-citrulline + L-aspartate + ATP = 2-(N(omega)-L-arginino)succinate + AMP + diphosphate + H(+). Its pathway is amino-acid biosynthesis; L-arginine biosynthesis; L-arginine from L-ornithine and carbamoyl phosphate: step 2/3. The sequence is that of Argininosuccinate synthase from Streptococcus thermophilus (strain CNRZ 1066).